The following is a 214-amino-acid chain: Thiamine-phosphate synthase (214 aa).

Residues 39 to 43 and Asn-71 each bind 4-amino-2-methyl-5-(diphosphooxymethyl)pyrimidine; that span reads QYRFK. Mg(2+) is bound by residues Asp-72 and Asp-91. Residue Ser-110 coordinates 4-amino-2-methyl-5-(diphosphooxymethyl)pyrimidine. Residue 136–138 coordinates 2-[(2R,5Z)-2-carboxy-4-methylthiazol-5(2H)-ylidene]ethyl phosphate; the sequence is TKT. Residue Lys-139 coordinates 4-amino-2-methyl-5-(diphosphooxymethyl)pyrimidine. 2-[(2R,5Z)-2-carboxy-4-methylthiazol-5(2H)-ylidene]ethyl phosphate contacts are provided by residues Gly-166 and 186 to 187; that span reads VS.

The protein belongs to the thiamine-phosphate synthase family. The cofactor is Mg(2+).

It catalyses the reaction 2-[(2R,5Z)-2-carboxy-4-methylthiazol-5(2H)-ylidene]ethyl phosphate + 4-amino-2-methyl-5-(diphosphooxymethyl)pyrimidine + 2 H(+) = thiamine phosphate + CO2 + diphosphate. It carries out the reaction 2-(2-carboxy-4-methylthiazol-5-yl)ethyl phosphate + 4-amino-2-methyl-5-(diphosphooxymethyl)pyrimidine + 2 H(+) = thiamine phosphate + CO2 + diphosphate. The catalysed reaction is 4-methyl-5-(2-phosphooxyethyl)-thiazole + 4-amino-2-methyl-5-(diphosphooxymethyl)pyrimidine + H(+) = thiamine phosphate + diphosphate. It participates in cofactor biosynthesis; thiamine diphosphate biosynthesis; thiamine phosphate from 4-amino-2-methyl-5-diphosphomethylpyrimidine and 4-methyl-5-(2-phosphoethyl)-thiazole: step 1/1. In terms of biological role, condenses 4-methyl-5-(beta-hydroxyethyl)thiazole monophosphate (THZ-P) and 2-methyl-4-amino-5-hydroxymethyl pyrimidine pyrophosphate (HMP-PP) to form thiamine monophosphate (TMP). The polypeptide is Thiamine-phosphate synthase (Hydrogenobaculum sp. (strain Y04AAS1)).